The primary structure comprises 1101 residues: Protein diaphanous homolog 2 (1101 aa).

The residue at position 1 (methionine 1) is an N-acetylmethionine. Residues 1 to 44 (MEQPGAAASGAGGGSEEPGGGRSNKRSAGNRAANEEETKNKPKL) are disordered. Positions 10–22 (GAGGGSEEPGGGR) are enriched in gly residues. In terms of domain architecture, GBD/FH3 spans 98-464 (SLNLSEKEVL…QIVLHCSGMD (367 aa)). Coiled coils occupy residues 366–418 (KEKE…MLKD) and 487–547 (KAKV…SSSG). The span at 536–546 (RTQAQVLSSSS) shows a compositional bias: polar residues. Disordered regions lie at residues 536–594 (RTQA…PPPP), 1010–1048 (NKRR…DINK), and 1070–1101 (RDRR…ISSK). The span at 549-594 (PGPPAAPPLPGVGPPPPPPAPPLPGGAPLPPPPPPLPGMMGIPPPP) shows a compositional bias: pro residues. Residues 549-623 (PGPPAAPPLP…PPPGISLNLP (75 aa)) enclose the FH1 domain. One can recognise an FH2 domain in the interval 628–1028 (QKKMYKPEVS…TRRAKLAKEK (401 aa)). Residues 903-1053 (SASKVSAQIL…IDINKEGDET (151 aa)) adopt a coiled-coil conformation. Composition is skewed to basic and acidic residues over residues 1010–1035 (NKRR…EKLE) and 1078–1090 (RNPD…LERS). Positions 1051 to 1081 (DETGVMDNLLEALQSGAAFRDRRKRIPRNPD) constitute a DAD domain.

This sequence belongs to the formin homology family. Diaphanous subfamily. Isoform 3 interacts with RHOD in the GTP-bound form. In terms of tissue distribution, expressed in testis, ovary, small intestine, prostate, lung, liver, kidney and leukocytes.

It localises to the cytoplasm. Its subcellular location is the cytosol. It is found in the early endosome. Functionally, could be involved in oogenesis. Involved in the regulation of endosome dynamics. Implicated in a novel signal transduction pathway, in which isoform 3 and CSK are sequentially activated by RHOD to regulate the motility of early endosomes through interactions with the actin cytoskeleton. This chain is Protein diaphanous homolog 2 (DIAPH2), found in Homo sapiens (Human).